Here is a 1370-residue protein sequence, read N- to C-terminus: Major capsid protein (1370 aa).

Belongs to the herpesviridae major capsid protein family. As to quaternary structure, homomultimer. Makes the hexons and eleven out of twelve pentons. Interacts with triplex proteins 1/TRX1 and 2/TRX2; adjacent capsomers are linked together in groups of three by triplexes, heterotrimeric complexes composed of one molecule of TRX1 and two molecules of TRX2. Interacts with scaffold protein; this interaction allows efficient MCP transport to the host nucleus. Interacts with capsid vertex component 2/CVC2. Interacts with the small capsomere-interacting protein/SCP.

The protein resides in the virion. It localises to the host nucleus. Its function is as follows. Self-assembles to form an icosahedral capsid with a T=16 symmetry, about 200 nm in diameter, and consisting of 150 hexons and 12 pentons (total of 162 capsomers). Hexons form the edges and faces of the capsid and are each composed of six MCP molecules. In contrast, one penton is found at each of the 12 vertices. Eleven of the pentons are MCP pentamers, while the last vertex is occupied by the portal complex. The capsid is surrounded by a layer of proteinaceous material designated the tegument which, in turn, is enclosed in an envelope of host cell-derived lipids containing virus-encoded glycoproteins. The protein is Major capsid protein of Connochaetes taurinus (Blue wildebeest).